The sequence spans 320 residues: Lipoyl synthase (320 aa).

Positions 67, 72, 78, 93, 97, 100, and 307 each coordinate [4Fe-4S] cluster. Residues 79–296 form the Radical SAM core domain; the sequence is FNHGTATFMI…REKANEMGFE (218 aa).

This sequence belongs to the radical SAM superfamily. Lipoyl synthase family. It depends on [4Fe-4S] cluster as a cofactor.

Its subcellular location is the cytoplasm. It carries out the reaction [[Fe-S] cluster scaffold protein carrying a second [4Fe-4S](2+) cluster] + N(6)-octanoyl-L-lysyl-[protein] + 2 oxidized [2Fe-2S]-[ferredoxin] + 2 S-adenosyl-L-methionine + 4 H(+) = [[Fe-S] cluster scaffold protein] + N(6)-[(R)-dihydrolipoyl]-L-lysyl-[protein] + 4 Fe(3+) + 2 hydrogen sulfide + 2 5'-deoxyadenosine + 2 L-methionine + 2 reduced [2Fe-2S]-[ferredoxin]. It participates in protein modification; protein lipoylation via endogenous pathway; protein N(6)-(lipoyl)lysine from octanoyl-[acyl-carrier-protein]: step 2/2. Catalyzes the radical-mediated insertion of two sulfur atoms into the C-6 and C-8 positions of the octanoyl moiety bound to the lipoyl domains of lipoate-dependent enzymes, thereby converting the octanoylated domains into lipoylated derivatives. In Glaesserella parasuis serovar 5 (strain SH0165) (Haemophilus parasuis), this protein is Lipoyl synthase.